A 410-amino-acid polypeptide reads, in one-letter code: Tyrosine--tRNA ligase (410 aa).

Residue Tyr36 participates in L-tyrosine binding. Positions 41–50 match the 'HIGH' region motif; sequence ATADSLTAGH. L-tyrosine contacts are provided by Tyr169 and Gln173. Positions 229 to 233 match the 'KMSKS' region motif; that stretch reads KMGKT. Lys232 provides a ligand contact to ATP. The S4 RNA-binding domain occupies 343-409; that stretch reads IDLITMMIDA…GKKAYHLFRA (67 aa).

The protein belongs to the class-I aminoacyl-tRNA synthetase family. TyrS type 1 subfamily. Homodimer.

The protein localises to the cytoplasm. It catalyses the reaction tRNA(Tyr) + L-tyrosine + ATP = L-tyrosyl-tRNA(Tyr) + AMP + diphosphate + H(+). In terms of biological role, catalyzes the attachment of tyrosine to tRNA(Tyr) in a two-step reaction: tyrosine is first activated by ATP to form Tyr-AMP and then transferred to the acceptor end of tRNA(Tyr). In Lachnoclostridium phytofermentans (strain ATCC 700394 / DSM 18823 / ISDg) (Clostridium phytofermentans), this protein is Tyrosine--tRNA ligase.